Consider the following 152-residue polypeptide: Gamma-glutamylaminecyclotransferase C (152 aa).

Residue 9–12 (YGSL) coordinates substrate. E84 acts as the Proton acceptor in catalysis.

Belongs to the gamma-glutamylcyclotransferase family.

It catalyses the reaction epsilon-(gamma-L-glutamyl)-L-lysine = 5-oxo-L-proline + L-lysine. Functionally, may contribute to degradation of proteins cross-linked by transglutaminases by degrading the cross-link between a lysine and a glutamic acid residue. Catalyzes the formation of 5-oxo-L-proline from L-gamma-glutamyl-L-epsilon-lysine. The sequence is that of Gamma-glutamylaminecyclotransferase C (ggact.3) from Danio rerio (Zebrafish).